The chain runs to 54 residues: UPF0391 membrane protein Pfl01_0044 (54 aa).

A run of 2 helical transmembrane segments spans residues 4-24 (WAIT…GGIA) and 29-49 (GIAK…FFFG).

It belongs to the UPF0391 family.

The protein localises to the cell membrane. In Pseudomonas fluorescens (strain Pf0-1), this protein is UPF0391 membrane protein Pfl01_0044.